A 50-amino-acid chain; its full sequence is Large ribosomal subunit protein bL33A (50 aa).

This sequence belongs to the bacterial ribosomal protein bL33 family.

In Mycoplasmopsis pulmonis (strain UAB CTIP) (Mycoplasma pulmonis), this protein is Large ribosomal subunit protein bL33A (rpmG1).